The sequence spans 146 residues: Hemoglobin subunit beta (146 aa).

The region spanning His-2–His-146 is the Globin domain. Residues His-63 and His-92 each coordinate heme b.

This sequence belongs to the globin family. Heterotetramer of two alpha chains and two beta chains. Red blood cells.

Functionally, involved in oxygen transport from the lung to the various peripheral tissues. The chain is Hemoglobin subunit beta (HBB) from Chloephaga melanoptera (Andean goose).